Consider the following 171-residue polypeptide: Neuronal vesicle trafficking-associated protein 2 (171 aa).

Polar residues predominate over residues 1-10 (MVKLNSNPSE). The disordered stretch occupies residues 1 to 21 (MVKLNSNPSEKGTKPPSVEDG). The Cytoplasmic portion of the chain corresponds to 1-71 (MVKLNSNPSE…FRVPKIAEFT (71 aa)). Residues 72-92 (VTILVSLALAFLACIVFLVVY) traverse the membrane as a helical; Signal-anchor for type II membrane protein segment. Topologically, residues 93–171 (KAFTYDHSCP…EPKPPKTQGH (79 aa)) are lumenal.

Belongs to the NSG family.

Its subcellular location is the membrane. It is found in the golgi apparatus. The protein resides in the trans-Golgi network membrane. It localises to the cell projection. The protein localises to the dendrite. Its subcellular location is the endosome membrane. It is found in the early endosome membrane. The protein resides in the late endosome membrane. It localises to the lysosome lumen. The protein localises to the cytoplasmic vesicle membrane. Its subcellular location is the golgi stack membrane. It is found in the endosome. The protein resides in the multivesicular body membrane. The polypeptide is Neuronal vesicle trafficking-associated protein 2 (Homo sapiens (Human)).